The following is a 166-amino-acid chain: Urease accessory protein UreE (166 aa).

Positions 133–154 (QPEHGAYGGGHHHSRHGDEDFN) are disordered.

This sequence belongs to the UreE family.

Its subcellular location is the cytoplasm. Functionally, involved in urease metallocenter assembly. Binds nickel. Probably functions as a nickel donor during metallocenter assembly. The sequence is that of Urease accessory protein UreE from Pseudomonas fluorescens (strain SBW25).